The chain runs to 185 residues: Transposon Tn3 resolvase (185 aa).

Residues 2 to 137 (RIFGYARVST…EGRQEAKLKG (136 aa)) enclose the Resolvase/invertase-type recombinase catalytic domain. Residue Ser10 is the O-(5'-phospho-DNA)-serine intermediate of the active site. The H-T-H motif DNA-binding region spans 161–180 (ATEIAHQLSIARSTVYKILE).

It belongs to the site-specific recombinase resolvase family.

In terms of biological role, resolvase catalyzes the resolution (a site-specific recombination) of the cointegrated replicon to yield the final transposition products. The polypeptide is Transposon Tn3 resolvase (tnpR) (Escherichia coli).